Here is a 481-residue protein sequence, read N- to C-terminus: Fibrinogen beta chain (481 aa).

The first 19 residues, 1-19 (MRHLWLLLLLCVFSVQTQA), serve as a signal peptide directing secretion. The tract at residues 22-81 (DDYDEPTDSLDARGHRPVDRRKEEPPSLRPAPPPISGGGYRARPAKATANQKKVERRPPD) is disordered. A compositionally biased stretch (basic and acidic residues) spans 31-47 (LDARGHRPVDRRKEEPP). The interval 35-37 (GHR) is beta-chain polymerization, binding distal domain of another fibrin. The stretch at 149 to 213 (QAQVKENENV…SDISAQMEYC (65 aa)) forms a coiled coil. 2 disulfides stabilise this stretch: cysteine 221–cysteine 306 and cysteine 231–cysteine 260. A Fibrinogen C-terminal domain is found at 222–478 (NIPVVSGKEC…RMSMKIRPFF (257 aa)). Asparagine 384 carries N-linked (GlcNAc...) asparagine glycosylation. An intrachain disulfide couples cysteine 414 to cysteine 427.

As to quaternary structure, heterohexamer; disulfide linked. Contains 2 sets of 3 non-identical chains (alpha, beta and gamma). The 2 heterotrimers are in head to head conformation with the N-termini in a small central domain. Post-translationally, conversion of fibrinogen to fibrin is triggered by thrombin, which cleaves fibrinopeptides A and B from alpha and beta chains, and thus exposes the N-terminal polymerization sites responsible for the formation of the soft clot.

It localises to the secreted. In terms of biological role, cleaved by the protease thrombin to yield monomers which, together with fibrinogen alpha (FGA) and fibrinogen gamma (FGG), polymerize to form an insoluble fibrin matrix. Fibrin has a major function in hemostasis as one of the primary components of blood clots. In addition, functions during the early stages of wound repair to stabilize the lesion and guide cell migration during re-epithelialization. Was originally thought to be essential for platelet aggregation, based on in vitro studies using anticoagulated blood. However, subsequent studies have shown that it is not absolutely required for thrombus formation in vivo. Enhances expression of SELP in activated platelets via an ITGB3-dependent pathway. Maternal fibrinogen is essential for successful pregnancy. Fibrin deposition is also associated with infection, where it protects against IFNG-mediated hemorrhage. May also facilitate the immune response via both innate and T-cell mediated pathways. The sequence is that of Fibrinogen beta chain (Fgb) from Mus musculus (Mouse).